The following is a 487-amino-acid chain: Sugar transporter ERD6-like 6 (487 aa).

Serine 2 carries the N-acetylserine modification. 12 helical membrane-spanning segments follow: residues 46 to 66 (ISVLACVLIVALGPIQFGFTC), 89 to 109 (VFGSLSNVGAMVGAIASGQIA), 115 to 135 (KGSLMIAAIPNIIGWLCISFA), 146 to 166 (LLEGFGVGIISYTVPVYIAEI), 178 to 198 (VNQLSVTIGIMLAYLLGLFVP), 201 to 221 (ILAVLGILPCTLLIPGLFFIP), 284 to 304 (LMVGIGLLVLQQLGGINGVLF), 320 to 340 (AATFGVGAIQVVATAISTWLV), 347 to 367 (LLLTISSVGMTISLVIVAAAF), 389 to 409 (VGVVAMVVFFSLGMGPIPWLI), 425 to 445 (IATLANWFFSWLITMTANLLL), and 451 to 471 (GTFTLYGLVCAFTVVFVTLWV).

It belongs to the major facilitator superfamily. Sugar transporter (TC 2.A.1.1) family.

The protein localises to the membrane. Sugar transporter. In Arabidopsis thaliana (Mouse-ear cress), this protein is Sugar transporter ERD6-like 6.